We begin with the raw amino-acid sequence, 777 residues long: Cullin-3 (777 aa).

The segment at Y568 to P596 is disordered. The span at S576–E589 shows a compositional bias: low complexity. The Cullin neddylation domain occupies D707–D769. K721 is covalently cross-linked (Glycyl lysine isopeptide (Lys-Gly) (interchain with G-Cter in NEDD8)).

This sequence belongs to the cullin family. As to quaternary structure, probable component of multiple cullin-RING-based BCB (BTB-CUL3-BTB) E3 ubiquitin-protein ligase complexes formed by cul-3, rbx-1 and a variable BTB domain-containing protein acting as both, adapter to cullin and substrate recognition component. Interacts with bath-15, bath-40, bath-41, bath-42, C17F4.8, tag-303, D2045.8, F57C2.1, ZC239.15 and B0281.5. Interacts with mel-26 (via BTB domain). Interacts with dcn-1. Neddylated. Deneddylated via its interaction with the COP9 signalosome (CSN) complex.

Its subcellular location is the cytoplasm. The protein resides in the nucleus. It functions in the pathway protein modification; protein ubiquitination. In terms of biological role, probable core component of multiple cullin-RING-based BCB (BTB-CUL3-BTB) E3 ubiquitin-protein ligase complexes which mediate the ubiquitination and subsequent proteasomal degradation of target proteins. Probably acts as a scaffold protein which may contribute to catalysis through positioning of the substrate and the ubiquitin-conjugating enzyme. Required to target mei-3/katanin for degradation at the meiosis to mitosis transition via its neddylation and deneddylation. Functions in ubiquitin-mediated degradation of CKIs to target cki-1 for degradation. Regulates microtubule stability in the early embryo. In body wall muscles, involved in the organization of myosin thick filaments, likely by regulating the degradation of microtubule severing protein mei-1 downstream of unc-89. Together with spop-1, may promote the ubiquitination and proteasomal degradation of target bromodomain-containing proteins such as bet-1. The polypeptide is Cullin-3 (Caenorhabditis elegans).